Here is a 340-residue protein sequence, read N- to C-terminus: Protein RecA (340 aa).

74–81 (GPESSGKT) serves as a coordination point for ATP.

It belongs to the RecA family.

It localises to the cytoplasm. Can catalyze the hydrolysis of ATP in the presence of single-stranded DNA, the ATP-dependent uptake of single-stranded DNA by duplex DNA, and the ATP-dependent hybridization of homologous single-stranded DNAs. It interacts with LexA causing its activation and leading to its autocatalytic cleavage. The polypeptide is Protein RecA (Porphyromonas gingivalis (strain ATCC 33277 / DSM 20709 / CIP 103683 / JCM 12257 / NCTC 11834 / 2561)).